The following is a 333-amino-acid chain: DNA-directed RNA polymerase subunit alpha (333 aa).

Residues 1–234 (MQISVNEFLT…QQLAAFVDLK (234 aa)) form an alpha N-terminal domain (alpha-NTD) region. The tract at residues 248 to 333 (IDPILLRPVD…SLKKDDKATA (86 aa)) is alpha C-terminal domain (alpha-CTD).

The protein belongs to the RNA polymerase alpha chain family. In terms of assembly, homodimer. The RNAP catalytic core consists of 2 alpha, 1 beta, 1 beta' and 1 omega subunit. When a sigma factor is associated with the core the holoenzyme is formed, which can initiate transcription.

The enzyme catalyses RNA(n) + a ribonucleoside 5'-triphosphate = RNA(n+1) + diphosphate. DNA-dependent RNA polymerase catalyzes the transcription of DNA into RNA using the four ribonucleoside triphosphates as substrates. The sequence is that of DNA-directed RNA polymerase subunit alpha from Ectopseudomonas mendocina (strain ymp) (Pseudomonas mendocina).